Here is a 219-residue protein sequence, read N- to C-terminus: uncharacterized protein (219 aa).

This is an uncharacterized protein from Escherichia coli (strain K12).